A 141-amino-acid chain; its full sequence is MKSKKQILRLRKRAEFLTVRNGEKRRGPLFLMEVRERTEEESNAAKTGDNPRVGFTVTKKNGNAVIRNRIRRRLKEAIRCHAGRDMAPSTDYVIVAREQALNAPFSQLTEELSRRITAKGERRSGRKRRTERPEPGPVNGK.

Disordered stretches follow at residues 37–56 (RTEEESNAAKTGDNPRVGFT) and 114–141 (RRITAKGERRSGRKRRTERPEPGPVNGK). Residues 114–123 (RRITAKGERR) are compositionally biased toward basic and acidic residues.

This sequence belongs to the RnpA family. Consists of a catalytic RNA component (M1 or rnpB) and a protein subunit.

It carries out the reaction Endonucleolytic cleavage of RNA, removing 5'-extranucleotides from tRNA precursor.. RNaseP catalyzes the removal of the 5'-leader sequence from pre-tRNA to produce the mature 5'-terminus. It can also cleave other RNA substrates such as 4.5S RNA. The protein component plays an auxiliary but essential role in vivo by binding to the 5'-leader sequence and broadening the substrate specificity of the ribozyme. This Brucella suis biovar 1 (strain 1330) protein is Ribonuclease P protein component.